A 273-amino-acid polypeptide reads, in one-letter code: Putative phosphoenolpyruvate synthase regulatory protein (273 aa).

ADP is bound at residue 153 to 160 (GVSRSGKT).

This sequence belongs to the pyruvate, phosphate/water dikinase regulatory protein family. PSRP subfamily.

It catalyses the reaction [pyruvate, water dikinase] + ADP = [pyruvate, water dikinase]-phosphate + AMP + H(+). The enzyme catalyses [pyruvate, water dikinase]-phosphate + phosphate + H(+) = [pyruvate, water dikinase] + diphosphate. Its function is as follows. Bifunctional serine/threonine kinase and phosphorylase involved in the regulation of the phosphoenolpyruvate synthase (PEPS) by catalyzing its phosphorylation/dephosphorylation. This Paracidovorax citrulli (strain AAC00-1) (Acidovorax citrulli) protein is Putative phosphoenolpyruvate synthase regulatory protein.